Reading from the N-terminus, the 1034-residue chain is Translation initiation factor IF-2 (1034 aa).

Disordered stretches follow at residues 118-140 (AAEAVDMQPESVEAQAPAPQSVE) and 154-446 (EAEA…NESA). 2 stretches are compositionally biased toward low complexity: residues 162-178 (TPPVETPAVEAVEAAAP) and 212-228 (PAVKAEAEPQSAQPAAS). The segment covering 304–315 (DRAREDARRAAE) has biased composition (basic and acidic residues). The tr-type G domain maps to 535–702 (PRAPVVTVMG…NVLLQAEILE (168 aa)). The tract at residues 544–551 (GHVDHGKT) is G1. Position 544–551 (544–551 (GHVDHGKT)) interacts with GTP. Residues 569–573 (GITQH) form a G2 region. Positions 590–593 (DTPG) are G3. Residues 590–594 (DTPGH) and 644–647 (NKID) contribute to the GTP site. Residues 644-647 (NKID) are G4. The interval 680–682 (SAK) is G5.

The protein belongs to the TRAFAC class translation factor GTPase superfamily. Classic translation factor GTPase family. IF-2 subfamily.

It localises to the cytoplasm. One of the essential components for the initiation of protein synthesis. Protects formylmethionyl-tRNA from spontaneous hydrolysis and promotes its binding to the 30S ribosomal subunits. Also involved in the hydrolysis of GTP during the formation of the 70S ribosomal complex. This Bordetella avium (strain 197N) protein is Translation initiation factor IF-2.